The primary structure comprises 546 residues: Peptidoglycan transport ATP-binding protein YejF (546 aa).

2 consecutive ABC transporter domains span residues 12-261 (VRDL…RHLL) and 291-530 (IKAG…KALL). Residues 46-53 (GESGSGKS) and 323-330 (GESGSGKT) each bind ATP.

It belongs to the ABC transporter superfamily. The complex is composed of one ATP-binding protein (YejF), two transmembrane proteins (YejB and YejE) and a solute-binding protein (YepA or YejA).

The protein resides in the cell inner membrane. Part of the ABC transporter complex YejBEF-YepA involved in the uptake of muropeptides, the breakdown products of cell wall peptidoglycan. The import of muropeptides into the cell enables peptidoglycan recycling, which is vital for cell wall integrity in this bacterium. Is also probably part of the ABC transporter complex YejABEF, which is likely involved in broad-spectrum peptide import. Responsible for energy coupling to the transport system. This Agrobacterium fabrum (strain C58 / ATCC 33970) (Agrobacterium tumefaciens (strain C58)) protein is Peptidoglycan transport ATP-binding protein YejF.